Here is a 254-residue protein sequence, read N- to C-terminus: MDSELEDLCSYVNEKIGNIKKILSIRNLGQDPALKTTLSKIGDEIIAVNELLNKFELEIQYQEQTNSSLKELCESLREECEDVEHLKEHVPPHLPQVTATQSLVHKPEPDPKESDKAEEPGLPKKPPREQRIIKEMQFITMDEFSDVPAYMKSRLTYCQINDIIKEINKAVVSKYKIMHQPKASMSSVKRNLYQRFINEETKDTKGHHFIVEADIKEFTALKVDKRFYVIMHILRHCHRLSEVRGGGLTRYVIT.

Residues 56–90 (ELEIQYQEQTNSSLKELCESLREECEDVEHLKEHV) are a coiled coil. The disordered stretch occupies residues 88–129 (EHVPPHLPQVTATQSLVHKPEPDPKESDKAEEPGLPKKPPRE). The tract at residues 91–131 (PPHLPQVTATQSLVHKPEPDPKESDKAEEPGLPKKPPREQR) is flexiple loop that anchors MAPRE1. Positions 92–95 (PHLP) match the Slightly degenerated SXLP motif; may mediate interaction with MAPRE1, targeting to microtubule plus ends, stabilization on kinetochores and is required for proper chromosome alignment to the metaphase plate motif. Over residues 105–129 (HKPEPDPKESDKAEEPGLPKKPPRE) the composition is skewed to basic and acidic residues. Residues 131 to 254 (RIIKEMQFIT…GGGLTRYVIT (124 aa)) form a binds microtubules and protein phosphatase PP1 subunit PPP1CA region. A Phosphothreonine modification is found at Thr-156. Ser-241 carries the post-translational modification Phosphoserine.

Belongs to the SKA1 family. Component of the SKA complex, composed of SKA1, SKA2 and SKA3. The SKA complex is a homodimer organized around a central W-shaped coiled-coil structure, formed by the interacting domains of SKA1, SKA2, and SKA3, each end of the 'W' is extended further by the C-terminal microtubule-binding domains of SKA1 and SKA3; the complex forms extended structures on microtubules. Interacts (via SXLP motif) with MAPRE1 (via C-terminus); the interaction is direct and stabilizes the kinetochore-microtubule attachment of the SKA1 complex. Interacts (via C-terminus) with protein phosphatase PP1 subunit PPP1CA; the interaction is direct and required for recruitment of PPP1CA to the kinetochore. Interacts with the NDC80 complex; the interaction is required to establish kinetochore-microtubule end-on attachments.

The protein resides in the cytoplasm. It localises to the cytoskeleton. It is found in the spindle. The protein localises to the chromosome. Its subcellular location is the centromere. The protein resides in the kinetochore. It localises to the microtubule organizing center. It is found in the centrosome. Functionally, component of the SKA complex, a microtubule plus end-binding complex of the outer kinetochore that stabilizes spindle microtubule-kinetochore attachments, promotes alignment of chromosomes at the mitotic spindle equator (chromosome congression) and assists suppression of the spindle assembly checkpoint. Kinetochores, consisting of a centromere-associated inner segment and a microtubule-contacting outer segment, play a crucial role in chromosome segregation by mediating the physical connection between centromeric DNA and spindle microtubules. The outer kinetochore is made up of the ten-subunit KMN network complex, comprising the MIS12, NDC80 and KNL1 complexes, and auxiliary microtubule-associated components such as the SKA complex; together they connect the outer kinetochore with the inner kinetochore, bind microtubules, and mediate interactions with mitotic checkpoint proteins that delay anaphase until chromosomes are bioriented on the spindle. The SKA complex is loaded onto bioriented kinetochores and it facilitates chromosome congression by stabilizing microtubules together with MAPRE1, and end-on attachment of the NDC80 complex to depolymerizing spindle microtubules, thereby assisting the poleward-moving kinetochore in withstanding microtubule pulling forces. The complex associates with dynamic microtubule plus-ends and can track both depolymerizing and elongating microtubules. The complex recruits protein phosphatase 1 (PP1) to the kinetochore in prometaphase and metaphase, to oppose spindle assembly checkpoint signaling and promote the onset of anaphase. In the complex, it mediates interactions with microtubules. It also stimulates AURKB/Aurora B catalytic activity. During meiosis the SKA complex stabilizes the meiotic spindle and is required for its migration to the cortex. In Mus musculus (Mouse), this protein is SKA complex subunit 1 (Ska1).